A 74-amino-acid polypeptide reads, in one-letter code: MRIVLDAERCVGAGQCEATAPELFTQGDDGLGLVRDRPVTPELLGPAREAVDRCPVRAIRIESSVRTGWARGAG.

One can recognise a 4Fe-4S ferredoxin-type domain in the interval 1–29; it reads MRIVLDAERCVGAGQCEATAPELFTQGDD. Residues cysteine 10, cysteine 16, and cysteine 54 each contribute to the [3Fe-4S] cluster site.

[3Fe-4S] cluster serves as cofactor.

It participates in antibiotic biosynthesis; mycinamicin biosynthesis. Specific electron transport protein capable of effectively supporting cytochrome P450 MycCI activity in the biosynthesis of mycinamicin, a 16-membered macrolide antibiotic. The polypeptide is Ferredoxin MycCII (Micromonospora griseorubida).